A 1171-amino-acid polypeptide reads, in one-letter code: Structural maintenance of chromosomes protein 2-2 (1171 aa).

Residues 2–1158 (HIKEICLEGF…DVLFRTKFVD (1157 aa)) form the Zinc-hook domain. 32–39 (GLNGSGKS) is an ATP binding site. A coiled-coil region spans residues 172 to 510 (RMYENKKEAA…LANVQFTYRD (339 aa)). The 118-residue stretch at 518–635 (SKVKGVVAKL…KTTDAAKEVA (118 aa)) folds into the SMC hinge domain. A coiled-coil region spans residues 674-1026 (HDLAEAETKF…LDEKKKETLK (353 aa)).

It belongs to the SMC family. SMC2 subfamily. Forms a heterodimer with SMC4. Component of the condensin complex, which contains the SMC2 and SMC4 heterodimer, and three non SMC subunits that probably regulate the complex: CAPH, CAPD2 and CAPG. Highly expressed in roots and young floral buds.

Its subcellular location is the nucleus. In terms of biological role, central component of the condensin complex, a complex required for conversion of interphase chromatin into mitotic-like condense chromosomes. The condensin complex probably introduces positive supercoils into relaxed DNA in the presence of type I topoisomerases and converts nicked DNA into positive knotted forms in the presence of type II topoisomerases. Also involved in chromosome segregation in meiosis. This is Structural maintenance of chromosomes protein 2-2 (SMC2-2) from Arabidopsis thaliana (Mouse-ear cress).